We begin with the raw amino-acid sequence, 180 residues long: MIIYLHGFDSTSPGNHEKVLQLQFIDPDVRFISYSTLHPRHDMQHLLKEVDKAVQQGGDKHSLICGVGLGGFWAERIGFLCGIRQVIFNPNLSPEQHMQGKIDRPEEYRDIATKCVEDFREKNRDRCLVVLSRHDEVLDSQLSAELLHKYYEIVWDEQQTHKFKNLSPHLQRIKAFKTLP.

It belongs to the UPF0227 family.

This is UPF0227 protein Spro_1925 from Serratia proteamaculans (strain 568).